The chain runs to 237 residues: MESLSELQNPLLPRSPTHLHRPYPYPEAPPGWSCQEQLYSFLLGGAGPARAHQLLDPGSLQLAVEAWYRPSCLLGRDKVKEPKAGSCETSFTEAREPLAGPAEEGSEPGQAAEDVTIHTVSYGVQEELQGQEDSQEEESDGTSSESECEDAFLTLPPRDHLGLTLFSMLCCFWPLGIAAFYFSQGTSKAISKGDFRLASTTSRRALFLATLSIAVGAGLYVAVVVALAAYMSQNGHG.

Disordered stretches follow at residues 1 to 23, 84 to 111, and 127 to 148; these read MESL…HRPY, AGSC…PGQA, and ELQG…ESEC. Residues 1-161 are Extracellular-facing; that stretch reads MESLSELQNP…FLTLPPRDHL (161 aa). Residues 129–148 show a composition bias toward acidic residues; that stretch reads QGQEDSQEEESDGTSSESEC. Residues 162–182 traverse the membrane as a helical segment; it reads GLTLFSMLCCFWPLGIAAFYF. Topologically, residues 183-204 are cytoplasmic; that stretch reads SQGTSKAISKGDFRLASTTSRR. The helical transmembrane segment at 205–225 threads the bilayer; that stretch reads ALFLATLSIAVGAGLYVAVVV. Over 226-237 the chain is Extracellular; it reads ALAAYMSQNGHG.

This sequence belongs to the CD225/Dispanin family. Expression is restricted to the caudate-putamen. Down-regulated in R6/2 transgenic mice, a model for Huntington disease.

It is found in the membrane. It localises to the golgi apparatus. The protein localises to the cis-Golgi network. This is Synapse differentiation-inducing gene protein 1-like (Syndig1l) from Mus musculus (Mouse).